The primary structure comprises 347 residues: Heme A synthase (347 aa).

8 consecutive transmembrane segments (helical) span residues 14 to 34 (VKVW…VGGI), 95 to 115 (YFHR…FLYF), 125 to 145 (LIVN…MGWL), 166 to 186 (LLLA…AVIL), 198 to 218 (LIFY…SLVA), 260 to 280 (FIHE…LLIL), 289 to 309 (LLLV…IYNV), and 311 to 331 (IALA…NTYL). Heme is bound at residue His-262. His-317 contacts heme.

It belongs to the COX15/CtaA family. Type 2 subfamily. In terms of assembly, interacts with CtaB. The cofactor is heme b.

Its subcellular location is the cell membrane. It carries out the reaction Fe(II)-heme o + 2 A + H2O = Fe(II)-heme a + 2 AH2. It participates in porphyrin-containing compound metabolism; heme A biosynthesis; heme A from heme O: step 1/1. Its function is as follows. Catalyzes the conversion of heme O to heme A by two successive hydroxylations of the methyl group at C8. The first hydroxylation forms heme I, the second hydroxylation results in an unstable dihydroxymethyl group, which spontaneously dehydrates, resulting in the formyl group of heme A. This Ehrlichia canis (strain Jake) protein is Heme A synthase.